A 211-amino-acid polypeptide reads, in one-letter code: FMN-dependent NADH:quinone oxidoreductase (211 aa).

FMN contacts are provided by residues 17 to 19 (SNS), 102 to 105 (MWNL), and 146 to 149 (SRGG).

It belongs to the azoreductase type 1 family. In terms of assembly, homodimer. Requires FMN as cofactor.

The enzyme catalyses 2 a quinone + NADH + H(+) = 2 a 1,4-benzosemiquinone + NAD(+). The catalysed reaction is N,N-dimethyl-1,4-phenylenediamine + anthranilate + 2 NAD(+) = 2-(4-dimethylaminophenyl)diazenylbenzoate + 2 NADH + 2 H(+). Functionally, quinone reductase that provides resistance to thiol-specific stress caused by electrophilic quinones. Its function is as follows. Also exhibits azoreductase activity. Catalyzes the reductive cleavage of the azo bond in aromatic azo compounds to the corresponding amines. This Macrococcus caseolyticus (strain JCSC5402) (Macrococcoides caseolyticum) protein is FMN-dependent NADH:quinone oxidoreductase.